The primary structure comprises 24 residues: Coenzyme PQQ synthesis protein A (24 aa).

A cross-link (pyrroloquinoline quinone (Glu-Tyr)) is located at residues 16 to 20; it reads EVTMY.

This sequence belongs to the PqqA family.

The protein operates within cofactor biosynthesis; pyrroloquinoline quinone biosynthesis. Functionally, required for coenzyme pyrroloquinoline quinone (PQQ) biosynthesis. PQQ is probably formed by cross-linking a specific glutamate to a specific tyrosine residue and excising these residues from the peptide. The chain is Coenzyme PQQ synthesis protein A from Pseudomonas fluorescens (strain Pf0-1).